A 1872-amino-acid chain; its full sequence is Ral GTPase-activating protein subunit alpha-2 (1872 aa).

Positions 350–370 are disordered; it reads DGAGSTEQDKSHSNSSTLSDR. Residues Ser-373, Ser-376, and Ser-379 each carry the phosphoserine modification. Positions 445–469 are enriched in basic and acidic residues; sequence PDKKDVAQEDADKLGLSETDSKEAS. The interval 445–481 is disordered; sequence PDKKDVAQEDADKLGLSETDSKEASSESSGHKRSSSW. Ser-486 is modified (phosphoserine). Position 696 is a phosphoserine; by PKB (Ser-696). 2 disordered regions span residues 711-730 and 758-813; these read FRSA…NTVR and QQVP…GITM. Thr-715 carries the phosphothreonine; by PKB modification. 2 stretches are compositionally biased toward polar residues: residues 758 to 768 and 775 to 795; these read QQVPRSSSTSD and SDSS…SEPK. Over residues 796–810 the composition is skewed to basic and acidic residues; it reads SVQESKGHVTHEHEG. Residues Ser-819 and Ser-820 each carry the phosphoserine modification. Positions 831–851 are disordered; the sequence is QQAHGRCRQRQTSESTGSDTV. Residues 840–849 are compositionally biased toward polar residues; sequence RQTSESTGSD. Ser-1592 is modified (phosphoserine). Residues 1634–1842 form the Rap-GAP domain; it reads LKNLDSRQCR…EERALYLEAI (209 aa).

As to quaternary structure, component of the heterodimeric RalGAP2 complex with RALGAPB. Heterodimerization is required for activity. As to expression, abundantly expressed in testis, pancreas, lung, thymus, brown fat, and white fat.

The protein localises to the cytoplasm. Functionally, catalytic subunit of the heterodimeric RalGAP2 complex which acts as a GTPase activator for the Ras-like small GTPases RALA and RALB. The sequence is that of Ral GTPase-activating protein subunit alpha-2 (Ralgapa2) from Mus musculus (Mouse).